Here is a 113-residue protein sequence, read N- to C-terminus: UPF0342 protein SZO_10960 (113 aa).

The protein belongs to the UPF0342 family.

The sequence is that of UPF0342 protein SZO_10960 from Streptococcus equi subsp. zooepidemicus (strain H70).